Here is a 319-residue protein sequence, read N- to C-terminus: Ribosomal large subunit pseudouridine synthase C (319 aa).

Residues 20-83 (QRIDNFLRTQ…AEREEEAVSP (64 aa)) enclose the S4 RNA-binding domain. The active site involves Asp144.

This sequence belongs to the pseudouridine synthase RluA family.

It carries out the reaction uridine(955/2504/2580) in 23S rRNA = pseudouridine(955/2504/2580) in 23S rRNA. Responsible for synthesis of pseudouridine from uracil at positions 955, 2504 and 2580 in 23S ribosomal RNA. The protein is Ribosomal large subunit pseudouridine synthase C (rluC) of Escherichia coli O6:H1 (strain CFT073 / ATCC 700928 / UPEC).